The sequence spans 105 residues: UPF0473 protein SAG2089 (105 aa).

Belongs to the UPF0473 family.

The protein is UPF0473 protein SAG2089 of Streptococcus agalactiae serotype V (strain ATCC BAA-611 / 2603 V/R).